The chain runs to 538 residues: Cytochrome P450 monooxygenase verH (538 aa).

Residues 2–21 (VFAMLVVCWSIFLGLWMLVS) form a helical membrane-spanning segment. C445 is a binding site for heme.

It belongs to the cytochrome P450 family. Heme serves as cofactor.

The protein localises to the membrane. Its pathway is secondary metabolite biosynthesis; terpenoid biosynthesis. It participates in mycotoxin biosynthesis. Its function is as follows. Cytochrome P450 monooxygenase; part of the gene cluster that mediates the biosynthesis of the neurotoxin verrucosidin, a methylated alpha-pyrone polyketide that inhibits oxidative phosphorylation in mitochondria and thereby causes neurological diseases. The carbon backbone of verrucosidin is synthesized by the HR-PKS verA, and further modified by the other verrucodidin cluster enzymes. The polypeptide is Cytochrome P450 monooxygenase verH (Penicillium polonicum).